The following is a 269-amino-acid chain: Surfeit locus protein 4 (269 aa).

Transmembrane regions (helical) follow at residues 64 to 84, 92 to 112, 179 to 199, 203 to 223, and 242 to 262; these read FLAT…CVLI, YACF…SILW, FFSI…AIGF, LAAL…NAFW, and TTSV…GVSM. Positions 266 to 269 match the Di-lysine motif motif; it reads KKEW.

Belongs to the SURF4 family.

It is found in the endoplasmic reticulum membrane. The protein localises to the endoplasmic reticulum-Golgi intermediate compartment membrane. Its subcellular location is the golgi apparatus membrane. Functionally, endoplasmic reticulum cargo receptor that mediates the export of lipoproteins by recruiting cargos into COPII vesicles to facilitate their secretion. Acts as a cargo receptor for lipoproteins bearing both APOB and APOA1, thereby regulating lipoprotein delivery and the maintenance of lipid homeostasis. This Takifugu rubripes (Japanese pufferfish) protein is Surfeit locus protein 4.